We begin with the raw amino-acid sequence, 687 residues long: Glycine--tRNA ligase beta subunit (687 aa).

This sequence belongs to the class-II aminoacyl-tRNA synthetase family. As to quaternary structure, tetramer of two alpha and two beta subunits.

The protein resides in the cytoplasm. It catalyses the reaction tRNA(Gly) + glycine + ATP = glycyl-tRNA(Gly) + AMP + diphosphate. The protein is Glycine--tRNA ligase beta subunit of Neisseria gonorrhoeae (strain NCCP11945).